A 359-amino-acid polypeptide reads, in one-letter code: Phospho-N-acetylmuramoyl-pentapeptide-transferase (359 aa).

10 consecutive transmembrane segments (helical) span residues 3–23 (QILI…PVLI), 55–75 (VAIL…GLAL), 84–104 (GLLV…DDLI), 120–140 (TVGI…FGNA), 156–176 (IATV…LVSA), 187–207 (LDGL…LITF), 231–251 (LALV…WNAA), 255–275 (IFMG…LSVT), 280–300 (ILAV…VVQI), and 334–354 (FWLL…GEWL).

This sequence belongs to the glycosyltransferase 4 family. MraY subfamily. The cofactor is Mg(2+).

The protein localises to the cell membrane. The catalysed reaction is UDP-N-acetyl-alpha-D-muramoyl-L-alanyl-gamma-D-glutamyl-meso-2,6-diaminopimeloyl-D-alanyl-D-alanine + di-trans,octa-cis-undecaprenyl phosphate = di-trans,octa-cis-undecaprenyl diphospho-N-acetyl-alpha-D-muramoyl-L-alanyl-D-glutamyl-meso-2,6-diaminopimeloyl-D-alanyl-D-alanine + UMP. The protein operates within cell wall biogenesis; peptidoglycan biosynthesis. Its function is as follows. Catalyzes the initial step of the lipid cycle reactions in the biosynthesis of the cell wall peptidoglycan: transfers peptidoglycan precursor phospho-MurNAc-pentapeptide from UDP-MurNAc-pentapeptide onto the lipid carrier undecaprenyl phosphate, yielding undecaprenyl-pyrophosphoryl-MurNAc-pentapeptide, known as lipid I. This Mycobacterium sp. (strain MCS) protein is Phospho-N-acetylmuramoyl-pentapeptide-transferase.